We begin with the raw amino-acid sequence, 464 residues long: Trehalose-6-phosphate synthase (464 aa).

Arginine 10 contributes to the D-glucose 6-phosphate binding site. 23 to 24 (GG) is a binding site for UDP-alpha-D-glucose. D-glucose 6-phosphate-binding residues include tyrosine 81 and aspartate 135. Residues arginine 268 and lysine 273 each contribute to the UDP-alpha-D-glucose site. Arginine 306 is a binding site for D-glucose 6-phosphate. 371–375 (LVAKE) provides a ligand contact to UDP-alpha-D-glucose.

The protein belongs to the glycosyltransferase 20 family. In terms of assembly, homotetramer.

It carries out the reaction D-glucose 6-phosphate + UDP-alpha-D-glucose = alpha,alpha-trehalose 6-phosphate + UDP + H(+). The protein operates within glycan biosynthesis; trehalose biosynthesis. Functionally, probably involved in the osmoprotection via the biosynthesis of trehalose. Catalyzes the transfer of glucose from UDP-alpha-D-glucose (UDP-Glc) to D-glucose 6-phosphate (Glc-6-P) to form trehalose-6-phosphate. Acts with retention of the anomeric configuration of the UDP-sugar donor. This is Trehalose-6-phosphate synthase from Sinorhizobium fredii (strain NBRC 101917 / NGR234).